A 450-amino-acid chain; its full sequence is Equilibrative nucleotide transporter 1 (450 aa).

Transmembrane regions (helical) follow at residues 63–83 (FAYIIYFTLGVGFLLPWNAFI), 101–121 (IFAVIYMLVALVCLFVIVVFY), 133–153 (LGLLLFVIALLVVPVLDLVYV), 168–188 (AAVALSGLGDALMQGGLIGVA), 196–216 (MQAVVAGTAGSGVLVSLLRIL), 234–254 (LYFAVGIVVMVICAVFYNVAH), 300–320 (HGFGIVLLYMVTLSIFPGYIT), 334–354 (ILLIAAYNVFDLVGKCLTAVF), 361–381 (IAVGGSIARLLFYPLFWGCLH), 394–414 (ILTCLLGLTNGYLTSVLMILA), and 430–450 (TVMFLVVGLASGSVIAWFWVI).

The protein belongs to the SLC29A/ENT transporter (TC 2.A.57) family. In terms of tissue distribution, in young seedlings, expressed in root elongation zone, root cortex, root-hair, at the transition to the shoot and cotyledons. Expressed in hydathodes of fully developed leaves and pollen.

Its subcellular location is the vacuole membrane. Its function is as follows. Nucleoside transporter involved in adenosine transport and required for nucleotide metabolism which influences growth and pollen germination. Has high affinity for adenosine when expressed in a heterologous system (yeast). The protein is Equilibrative nucleotide transporter 1 (ENT1) of Arabidopsis thaliana (Mouse-ear cress).